The chain runs to 397 residues: Tryptophan synthase beta chain (397 aa).

K86 carries the N6-(pyridoxal phosphate)lysine modification.

Belongs to the TrpB family. Tetramer of two alpha and two beta chains. Requires pyridoxal 5'-phosphate as cofactor.

It catalyses the reaction (1S,2R)-1-C-(indol-3-yl)glycerol 3-phosphate + L-serine = D-glyceraldehyde 3-phosphate + L-tryptophan + H2O. The protein operates within amino-acid biosynthesis; L-tryptophan biosynthesis; L-tryptophan from chorismate: step 5/5. The beta subunit is responsible for the synthesis of L-tryptophan from indole and L-serine. This is Tryptophan synthase beta chain from Aeromonas salmonicida (strain A449).